The chain runs to 239 residues: Uracil-DNA glycosylase (239 aa).

Aspartate 65 functions as the Proton acceptor in the catalytic mechanism.

It belongs to the uracil-DNA glycosylase (UDG) superfamily. UNG family.

It is found in the cytoplasm. The catalysed reaction is Hydrolyzes single-stranded DNA or mismatched double-stranded DNA and polynucleotides, releasing free uracil.. Excises uracil residues from the DNA which can arise as a result of misincorporation of dUMP residues by DNA polymerase or due to deamination of cytosine. In Levilactobacillus brevis (strain ATCC 367 / BCRC 12310 / CIP 105137 / JCM 1170 / LMG 11437 / NCIMB 947 / NCTC 947) (Lactobacillus brevis), this protein is Uracil-DNA glycosylase.